Consider the following 387-residue polypeptide: Chaperone protein DnaJ (387 aa).

The J domain occupies Asp-5 to Gly-70. The CR-type zinc finger occupies Gly-130–Ser-208. Positions 143, 146, 160, 163, 182, 185, 196, and 199 each coordinate Zn(2+). CXXCXGXG motif repeat units follow at residues Cys-143–Gly-150, Cys-160–Gly-167, Cys-182–Gly-189, and Cys-196–Gly-203.

Belongs to the DnaJ family. Homodimer. Zn(2+) serves as cofactor.

It localises to the cytoplasm. Functionally, participates actively in the response to hyperosmotic and heat shock by preventing the aggregation of stress-denatured proteins and by disaggregating proteins, also in an autonomous, DnaK-independent fashion. Unfolded proteins bind initially to DnaJ; upon interaction with the DnaJ-bound protein, DnaK hydrolyzes its bound ATP, resulting in the formation of a stable complex. GrpE releases ADP from DnaK; ATP binding to DnaK triggers the release of the substrate protein, thus completing the reaction cycle. Several rounds of ATP-dependent interactions between DnaJ, DnaK and GrpE are required for fully efficient folding. Also involved, together with DnaK and GrpE, in the DNA replication of plasmids through activation of initiation proteins. The chain is Chaperone protein DnaJ from Hydrogenovibrio crunogenus (strain DSM 25203 / XCL-2) (Thiomicrospira crunogena).